We begin with the raw amino-acid sequence, 103 residues long: Small ribosomal subunit protein uS10 (103 aa).

Belongs to the universal ribosomal protein uS10 family. As to quaternary structure, part of the 30S ribosomal subunit.

Functionally, involved in the binding of tRNA to the ribosomes. The protein is Small ribosomal subunit protein uS10 of Chlorobium chlorochromatii (strain CaD3).